The chain runs to 338 residues: DNA-directed RNA polymerase subunit alpha (338 aa).

Residues 1–234 (MIHKNWAELI…DQLGIFVNFE (234 aa)) form an alpha N-terminal domain (alpha-NTD) region. The interval 250–338 (FNPLLLKKVD…DLAKKFEDSF (89 aa)) is alpha C-terminal domain (alpha-CTD).

This sequence belongs to the RNA polymerase alpha chain family. Homodimer. The RNAP catalytic core consists of 2 alpha, 1 beta, 1 beta' and 1 omega subunit. When a sigma factor is associated with the core the holoenzyme is formed, which can initiate transcription.

The catalysed reaction is RNA(n) + a ribonucleoside 5'-triphosphate = RNA(n+1) + diphosphate. In terms of biological role, DNA-dependent RNA polymerase catalyzes the transcription of DNA into RNA using the four ribonucleoside triphosphates as substrates. This Roseobacter denitrificans (strain ATCC 33942 / OCh 114) (Erythrobacter sp. (strain OCh 114)) protein is DNA-directed RNA polymerase subunit alpha.